A 393-amino-acid polypeptide reads, in one-letter code: NAD(P)H-quinone oxidoreductase subunit H, chloroplastic (393 aa).

It belongs to the complex I 49 kDa subunit family. As to quaternary structure, NDH is composed of at least 16 different subunits, 5 of which are encoded in the nucleus.

It localises to the plastid. It is found in the chloroplast thylakoid membrane. It carries out the reaction a plastoquinone + NADH + (n+1) H(+)(in) = a plastoquinol + NAD(+) + n H(+)(out). The enzyme catalyses a plastoquinone + NADPH + (n+1) H(+)(in) = a plastoquinol + NADP(+) + n H(+)(out). NDH shuttles electrons from NAD(P)H:plastoquinone, via FMN and iron-sulfur (Fe-S) centers, to quinones in the photosynthetic chain and possibly in a chloroplast respiratory chain. The immediate electron acceptor for the enzyme in this species is believed to be plastoquinone. Couples the redox reaction to proton translocation, and thus conserves the redox energy in a proton gradient. The polypeptide is NAD(P)H-quinone oxidoreductase subunit H, chloroplastic (Jasminum nudiflorum (Winter jasmine)).